Reading from the N-terminus, the 325-residue chain is MANIEKDHQKVILVGDGAVGSYYAYALTLQGIAQEVGIVDIFKEKTQGDAIDLSDALAFTSPKKIYAAEYSDAKDADVVVITAGAPQKPGETRLDLVSKNLKILKTIVDPIVESGFNGIFLVAANPVDILTYATWKLSGFPKERVIGSGTSLDSARFRKDIAEMVNVDARSVHAYIMGEHGDTEFPVWSHANIGGIKISEWVKAHPEVKEEELVKIFESVRDAAYTIINLKGATFYGIGTALARITKAILDDENAVLPLSVFMDGQYGLNDIFIGSPAVINRSGITNILEIPLTDHEMESMHKSAKQLKDIVTKAFEELDIETRQ.

NAD(+) is bound by residues V19, D40, K45, Y70, and 84–85 (GA). Q87 and R93 together coordinate substrate. Residues T106, 123–125 (AAN), and S148 contribute to the NAD(+) site. A substrate-binding site is contributed by 125–128 (NPVD). Substrate is bound at residue 153–156 (DSAR). R158 and H173 together coordinate beta-D-fructose 1,6-bisphosphate. H180 (proton acceptor) is an active-site residue. The residue at position 225 (Y225) is a Phosphotyrosine. A substrate-binding site is contributed by T234.

The protein belongs to the LDH/MDH superfamily. LDH family. Homotetramer.

The protein localises to the cytoplasm. It carries out the reaction (S)-lactate + NAD(+) = pyruvate + NADH + H(+). Its pathway is fermentation; pyruvate fermentation to lactate; (S)-lactate from pyruvate: step 1/1. Allosterically activated by fructose 1,6-bisphosphate (FBP). Catalyzes the conversion of lactate to pyruvate. The polypeptide is L-lactate dehydrogenase (Latilactobacillus sakei (Lactobacillus sakei)).